A 202-amino-acid chain; its full sequence is Inner membrane-spanning protein YciB (202 aa).

Helical transmembrane passes span 3 to 23 (ILFD…AGGN), 46 to 66 (ILLA…WVWM), 73 to 93 (TMLW…LFFH), 100 to 120 (WKPT…AVIF), 145 to 165 (LAWA…AYNF), and 173 to 193 (FKLF…GFYL).

It belongs to the YciB family.

Its subcellular location is the cell inner membrane. In terms of biological role, plays a role in cell envelope biogenesis, maintenance of cell envelope integrity and membrane homeostasis. The polypeptide is Inner membrane-spanning protein YciB (Aromatoleum aromaticum (strain DSM 19018 / LMG 30748 / EbN1) (Azoarcus sp. (strain EbN1))).